The following is a 347-amino-acid chain: Ribosomal RNA small subunit methyltransferase C (347 aa).

It belongs to the methyltransferase superfamily. RsmC family. In terms of assembly, monomer.

Its subcellular location is the cytoplasm. It catalyses the reaction guanosine(1207) in 16S rRNA + S-adenosyl-L-methionine = N(2)-methylguanosine(1207) in 16S rRNA + S-adenosyl-L-homocysteine + H(+). Functionally, specifically methylates the guanine in position 1207 of 16S rRNA in the 30S particle. The sequence is that of Ribosomal RNA small subunit methyltransferase C from Shewanella baltica (strain OS155 / ATCC BAA-1091).